Consider the following 134-residue polypeptide: Profilin-2 (134 aa).

C13 and C118 are joined by a disulfide. An Involved in PIP2 interaction motif is present at residues 84–100; that stretch reads AVIRGKKGSGGITIKKT. At T114 the chain carries Phosphothreonine.

Belongs to the profilin family. As to quaternary structure, occurs in many kinds of cells as a complex with monomeric actin in a 1:1 ratio. Post-translationally, phosphorylated by MAP kinases.

Its subcellular location is the cytoplasm. It is found in the cytoskeleton. Functionally, binds to actin and affects the structure of the cytoskeleton. At high concentrations, profilin prevents the polymerization of actin, whereas it enhances it at low concentrations. The chain is Profilin-2 from Olea europaea (Common olive).